Here is a 221-residue protein sequence, read N- to C-terminus: Probable transaldolase (221 aa).

Lysine 87 (schiff-base intermediate with substrate) is an active-site residue.

It belongs to the transaldolase family. Type 3B subfamily.

The protein resides in the cytoplasm. It catalyses the reaction D-sedoheptulose 7-phosphate + D-glyceraldehyde 3-phosphate = D-erythrose 4-phosphate + beta-D-fructose 6-phosphate. It functions in the pathway carbohydrate degradation; pentose phosphate pathway; D-glyceraldehyde 3-phosphate and beta-D-fructose 6-phosphate from D-ribose 5-phosphate and D-xylulose 5-phosphate (non-oxidative stage): step 2/3. Transaldolase is important for the balance of metabolites in the pentose-phosphate pathway. This chain is Probable transaldolase, found in Syntrophobacter fumaroxidans (strain DSM 10017 / MPOB).